We begin with the raw amino-acid sequence, 142 residues long: Large ribosomal subunit protein mL42 (142 aa).

Residues methionine 1–histidine 31 constitute a mitochondrion transit peptide.

Belongs to the mitochondrion-specific ribosomal protein mL42 family. In terms of assembly, component of the mitochondrial ribosome large subunit (39S) which comprises a 16S rRNA and about 50 distinct proteins. Component of the mitochondrial ribosome small subunit (28S) which comprises a 12S rRNA and about 30 distinct proteins.

Its subcellular location is the mitochondrion. The sequence is that of Large ribosomal subunit protein mL42 (Mrpl42) from Mus musculus (Mouse).